The sequence spans 802 residues: Outer membrane usher protein CssD (802 aa).

The protein belongs to the fimbrial export usher family.

The protein resides in the cell outer membrane. Functionally, involved in the export and assembly of C6 fimbrial subunits across the outer membrane. This Escherichia coli protein is Outer membrane usher protein CssD (cssD).